A 559-amino-acid chain; its full sequence is CTP synthase (559 aa).

The amidoligase domain stretch occupies residues 1–283; that stretch reads MSTSRTTTNN…DTFLIRRLDL (283 aa). Position 25 (serine 25) interacts with CTP. Residue serine 25 participates in UTP binding. Residues 26–31 and aspartate 83 contribute to the ATP site; that span reads SLGKGL. The Mg(2+) site is built by aspartate 83 and glutamate 157. Residues 164–166, 204–209, and lysine 240 each bind CTP; these read DIE and KTKPTQ. Residues 204–209 and lysine 240 each bind UTP; that span reads KTKPTQ. One can recognise a Glutamine amidotransferase type-1 domain in the interval 308–557; that stretch reads TVGIVGKYVD…VAAALAAAVT (250 aa). Residue glycine 371 participates in L-glutamine binding. The active-site Nucleophile; for glutamine hydrolysis is the cysteine 398. L-glutamine contacts are provided by residues 399–402, glutamate 421, and arginine 482; that span reads LGLQ. Residues histidine 530 and glutamate 532 contribute to the active site.

It belongs to the CTP synthase family. As to quaternary structure, homotetramer.

The enzyme catalyses UTP + L-glutamine + ATP + H2O = CTP + L-glutamate + ADP + phosphate + 2 H(+). It carries out the reaction L-glutamine + H2O = L-glutamate + NH4(+). The catalysed reaction is UTP + NH4(+) + ATP = CTP + ADP + phosphate + 2 H(+). The protein operates within pyrimidine metabolism; CTP biosynthesis via de novo pathway; CTP from UDP: step 2/2. Its activity is regulated as follows. Allosterically activated by GTP, when glutamine is the substrate; GTP has no effect on the reaction when ammonia is the substrate. The allosteric effector GTP functions by stabilizing the protein conformation that binds the tetrahedral intermediate(s) formed during glutamine hydrolysis. Inhibited by the product CTP, via allosteric rather than competitive inhibition. In terms of biological role, catalyzes the ATP-dependent amination of UTP to CTP with either L-glutamine or ammonia as the source of nitrogen. Regulates intracellular CTP levels through interactions with the four ribonucleotide triphosphates. This Corynebacterium efficiens (strain DSM 44549 / YS-314 / AJ 12310 / JCM 11189 / NBRC 100395) protein is CTP synthase.